A 64-amino-acid polypeptide reads, in one-letter code: Neurotoxin BmK-II (64 aa).

The LCN-type CS-alpha/beta domain occupies 2–64; that stretch reads RDAYIAKPHN…VPIRIPGNCH (63 aa). 4 disulfide bridges follow: cysteine 12/cysteine 63, cysteine 16/cysteine 36, cysteine 22/cysteine 46, and cysteine 26/cysteine 48.

Belongs to the long (4 C-C) scorpion toxin superfamily. Sodium channel inhibitor family. Alpha subfamily. Expressed by the venom gland.

Its subcellular location is the secreted. Its function is as follows. Binds to sodium channels (Nav) and inhibits the inactivation of the activated channels, thereby blocking neuronal transmission. This toxin is active against mammals and insects. BmK-II is 6-fold less toxic than BmK-I. The chain is Neurotoxin BmK-II from Olivierus martensii (Manchurian scorpion).